A 206-amino-acid chain; its full sequence is Ras-related protein Ral-A (206 aa).

GTP-binding positions include 24–29, 40–46, and 127–130; these read GVGKSA, VEDYEPT, and NKSD. The Effector region motif lies at 43–51; that stretch reads YEPTKADSY. T46 carries a (Microbial infection) O-linked (Glc) threonine; by P.sordellii toxin TcsL glycan. A Phosphoserine; by AURKA modification is found at S194. C203 bears the Cysteine methyl ester mark. The S-geranylgeranyl cysteine moiety is linked to residue C203. Residues 204 to 206 constitute a propeptide, removed in mature form; it reads CIL.

The protein belongs to the small GTPase superfamily. Ras family. In terms of assembly, interacts (via effector domain) with RALBP1; during mitosis, recruits RALBP1 to the mitochondrion where it promotes DNM1L phosphorylation and mitochondrial fission. Interacts with EXOC2/Sec5 and EXOC8/Exo84; binding to EXOC2 and EXOC8 is mutually exclusive. Interacts with Clostridium exoenzyme C3. Interacts with RALGPS1. Interacts with LPAR1 and LPAR2. Interacts with GRK2 in response to LPAR1 activation. RALA and GRK2 binding to LPAR1 is mutually exclusive. Interacts with CDC42. In terms of processing, phosphorylated. Phosphorylation at Ser-194 by AURKA/Aurora kinase A, during mitosis, induces RALA localization to the mitochondrion where it regulates mitochondrial fission. Post-translationally, prenylation is essential for membrane localization. The geranylgeranylated form and the farnesylated mutant do not undergo alternative prenylation in response to geranylgeranyltransferase I inhibitors (GGTIs) and farnesyltransferase I inhibitors (FTIs). (Microbial infection) Glucosylated at Thr-46 by P.sordellii toxin TcsL from strain 6018. Monoglucosylation completely prevents the recognition of the downstream effector, blocking the GTPases in their inactive form. Not glucosylated by TcsL from strain VPI 9048.

Its subcellular location is the cell membrane. It is found in the cleavage furrow. The protein resides in the midbody. It localises to the midbody ring. The protein localises to the mitochondrion. It carries out the reaction GTP + H2O = GDP + phosphate + H(+). Its activity is regulated as follows. Alternates between an inactive form bound to GDP and an active form bound to GTP. Activated by a guanine nucleotide-exchange factor (GEF) and inactivated by a GTPase-activating protein (GAP). Functionally, multifunctional GTPase involved in a variety of cellular processes including gene expression, cell migration, cell proliferation, oncogenic transformation and membrane trafficking. Accomplishes its multiple functions by interacting with distinct downstream effectors. Acts as a GTP sensor for GTP-dependent exocytosis of dense core vesicles. The RALA-exocyst complex regulates integrin-dependent membrane raft exocytosis and growth signaling. Key regulator of LPAR1 signaling and competes with GRK2 for binding to LPAR1 thus affecting the signaling properties of the receptor. Required for anchorage-independent proliferation of transformed cells. During mitosis, supports the stabilization and elongation of the intracellular bridge between dividing cells. Cooperates with EXOC2 to recruit other components of the exocyst to the early midbody. During mitosis, also controls mitochondrial fission by recruiting to the mitochondrion RALBP1, which mediates the phosphorylation and activation of DNM1L by the mitotic kinase cyclin B-CDK1. This is Ras-related protein Ral-A (RALA) from Homo sapiens (Human).